Consider the following 505-residue polypeptide: Formate--tetrahydrofolate ligase (505 aa).

This sequence belongs to the formate--tetrahydrofolate ligase family.

The catalysed reaction is (6S)-5,6,7,8-tetrahydrofolate + formate + ATP = (6R)-10-formyltetrahydrofolate + ADP + phosphate. The protein operates within one-carbon metabolism; tetrahydrofolate interconversion. The sequence is that of Formate--tetrahydrofolate ligase (fhs) from Bifidobacterium longum (strain NCC 2705).